We begin with the raw amino-acid sequence, 61 residues long: Small ribosomal subunit protein uS14 (61 aa).

Residues 1 to 12 (MSESETTDEPDS) are compositionally biased toward acidic residues. The interval 1–25 (MSESETTDEPDSETASSERTGQLES) is disordered. Positions 26, 29, 44, and 47 each coordinate Zn(2+).

Belongs to the universal ribosomal protein uS14 family. Zinc-binding uS14 subfamily. As to quaternary structure, part of the 30S ribosomal subunit. It depends on Zn(2+) as a cofactor.

Functionally, binds 16S rRNA, required for the assembly of 30S particles. This is Small ribosomal subunit protein uS14 from Haloarcula marismortui (strain ATCC 43049 / DSM 3752 / JCM 8966 / VKM B-1809) (Halobacterium marismortui).